The primary structure comprises 85 residues: Large ribosomal subunit protein bL27 (85 aa).

Residues 1-20 are disordered; sequence MAHKKAGGSTRNGRDSEAKR.

The protein belongs to the bacterial ribosomal protein bL27 family.

The chain is Large ribosomal subunit protein bL27 from Escherichia coli O139:H28 (strain E24377A / ETEC).